Reading from the N-terminus, the 294-residue chain is Homeobox-leucine zipper protein ATHB-13 (294 aa).

The segment at residues 82–141 is a DNA-binding region (homeobox); that stretch reads MGEKKRRLNMEQVKTLEKNFELGNKLEPERKMQLARALGLQPRQIAIWFQNRRARWKTKQ. Residues 142–177 form a leucine-zipper region; that stretch reads LEKDYDTLKRQFDTLKAENDLLQTHNQKLQAEIMGL. Residues 181-246 are disordered; the sequence is EQTESINLNK…FFPPSPATAT (66 aa). Low complexity predominate over residues 197-210; it reads SNRSDNSSDNLRLD. Residues 214–223 are compositionally biased toward polar residues; the sequence is APPSNDSTLT.

The protein belongs to the HD-ZIP homeobox family. Class I subfamily. In terms of tissue distribution, predominantly expressed in leaves and flowers.

The protein resides in the nucleus. Probable transcription factor that may act in the sucrose-signaling pathway. This is Homeobox-leucine zipper protein ATHB-13 (ATHB-13) from Arabidopsis thaliana (Mouse-ear cress).